A 575-amino-acid chain; its full sequence is MFAVSPSSFSPTTISPRRSGQRNEPRKFSVVRAGAKRILYGKDSREKLQAGIDKLADAVSITLGPRGRNVVLAEKDTIKVINDGVTIAKSIELPDTIENAGATLIQEVAIKMNESAGDGTTTAIILAREMIKAGSLAIAFGANAVSVKNGMNKTVKELVRVLQMKSIPVQGKNDIKAVASISAGNDEFVGNLIAETVEKIGPDGVISIESSSTSETSVIVEEGMKFDKGYMSPHFITNQEKSTVEFDKAKILVTDQKITSAKELVPLLEKTSQLSVPLLIIAEDISAEVLEILVVNKKQGLINVAVVKCPGMLDGKKALLQDIALMTGADYLSGDLGMSLMGATSDQLGVSRRVVITANSTTIVADASTKPEIQARIAQMKKDLAETDNSYLSKKIAERIAKLTGGVAVIKVGGHTETELEDRKLRIEDAKNATFAAMREGIVPGGGATYIHLLDEIPRIKKNLMEDSYEQIGADIVAMALTAPAMAIATNAGVDGSVVVQKTRELEWRSGYNAMSGKYEDLLNAGIADPCRVSRFALQNAVSVAGIILTTQAVLVEKIKQPKPAVPQVPGIPTS.

A compositionally biased stretch (low complexity) spans 1–18 (MFAVSPSSFSPTTISPRR). A disordered region spans residues 1 to 27 (MFAVSPSSFSPTTISPRRSGQRNEPRK). A chloroplast-targeting transit peptide spans 1–32 (MFAVSPSSFSPTTISPRRSGQRNEPRKFSVVR).

This sequence belongs to the chaperonin (HSP60) family. As to quaternary structure, part of the Cpn60 complex composed of 7 alpha and 7 beta subunits.

The protein localises to the plastid. The protein resides in the chloroplast. In terms of biological role, involved in protein assisted folding. The polypeptide is Chaperonin 60 subunit alpha 2, chloroplastic (CPN60A2) (Arabidopsis thaliana (Mouse-ear cress)).